A 150-amino-acid polypeptide reads, in one-letter code: uncharacterized protein (150 aa).

5 consecutive repeat copies span residues 101 to 105 (FHEVN), 106 to 110 (HHEVN), 111 to 115 (HHKIN), 116 to 120 (HHEVN), and 121 to 125 (HHKIN). The segment at 101–125 (FHEVNHHEVNHHKINHHEVNHHKIN) is 5 X 5 AA tandem repeats of [FH]-H-[EK]-[IV]-N.

It belongs to the asfivirus D129L family.

This is an uncharacterized protein from African swine fever virus (isolate Tick/Malawi/Lil 20-1/1983) (ASFV).